A 445-amino-acid polypeptide reads, in one-letter code: Branched-chain amino acid permease BraB (445 aa).

12 helical membrane-spanning segments follow: residues 11–31 (IIIG…IYPP), 45–65 (IGGF…AIAL), 79–99 (PVFG…LFAI), 122–142 (LSLL…ALNP), 158–178 (FTII…GLGA), 192–212 (FLEG…VVVV), 233–253 (AGVI…YLGA), 275–295 (YLFG…ACLT), 311–331 (LIPA…SLII), 339–359 (IIAF…VIIV), 375–395 (IACL…AAGF), and 415–435 (IGWV…TLFI).

This sequence belongs to the branched chain amino acid transporter family.

It is found in the cell membrane. In terms of biological role, branched-chain amino acid transport system which is involved in the uptake of isoleucine, valine and probably leucine. Together with BcaP and BrnQ, plays an important role in the activation of CodY, a branched-chain amino acid-responsive transcriptional regulator that controls the expression of several dozen transcription units in B.subtilis. The polypeptide is Branched-chain amino acid permease BraB (Bacillus subtilis (strain 168)).